Here is a 238-residue protein sequence, read N- to C-terminus: Uridylate kinase (238 aa).

12–15 (KLSG) serves as a coordination point for ATP. Gly-54 is a UMP binding site. The ATP site is built by Gly-55 and Arg-59. UMP-binding positions include Asp-74 and 135 to 142 (TGNPYFTT). Positions 162, 163, 168, and 171 each coordinate ATP.

Belongs to the UMP kinase family. In terms of assembly, homohexamer.

It is found in the cytoplasm. The enzyme catalyses UMP + ATP = UDP + ADP. It functions in the pathway pyrimidine metabolism; CTP biosynthesis via de novo pathway; UDP from UMP (UMPK route): step 1/1. Inhibited by UTP. Its function is as follows. Catalyzes the reversible phosphorylation of UMP to UDP. The sequence is that of Uridylate kinase from Bradyrhizobium sp. (strain ORS 278).